The following is a 292-amino-acid chain: Sulfofructosephosphate aldolase (292 aa).

Catalysis depends on lysine 193, which acts as the Schiff-base intermediate with substrate.

It belongs to the aldolase LacD family. In terms of assembly, homotetramer.

The catalysed reaction is 6-deoxy-6-sulfo-D-fructose 1-phosphate = (2S)-3-sulfolactaldehyde + dihydroxyacetone phosphate. Functionally, cleaves 6-deoxy-6-sulfo-D-fructose 1-phosphate (SFP) to form dihydroxyacetone phosphate (DHAP) and 3-sulfolactaldehyde (SLA). This chain is Sulfofructosephosphate aldolase (yihT), found in Salmonella typhi.